An 897-amino-acid polypeptide reads, in one-letter code: Interference hedgehog (897 aa).

A signal peptide spans 1 to 26; sequence MSVTRGHKSTPSLLLLFLSVLTSLLA. Residues 27 to 702 lie on the Extracellular side of the membrane; the sequence is AIPVLQANAP…THNETFNMNP (676 aa). 4 Ig-like C2-type domains span residues 40 to 147, 148 to 235, 244 to 336, and 342 to 429; these read PGVR…ATIS, GDKI…RRLE, PSAA…YIQL, and PRIV…LQVN. 3 cysteine pairs are disulfide-bonded: Cys63/Cys125, Cys169/Cys217, and Cys272/Cys320. N-linked (GlcNAc...) asparagine glycosylation is found at Asn96 and Asn99. 4 N-linked (GlcNAc...) asparagine glycosylation sites follow: Asn296, Asn351, Asn393, and Asn467. Residues Cys363 and Cys411 are joined by a disulfide bond. The segment at 434–468 is disordered; sequence QAGDGMGTGGMGRSSNRNAHNRKQKQMVPPSAPNV. Fibronectin type-III domains are found at residues 462–571 and 579–674; these read PPSA…LQRG and VPEL…TQRP. Heparin contacts are provided by Arg498, Lys504, and Lys506. An N-linked (GlcNAc...) asparagine glycan is attached at Asn530. Arg545 is a heparin binding site. A glycan (N-linked (GlcNAc...) asparagine) is linked at Asn561. A compositionally biased stretch (polar residues) spans 666–682; the sequence is LKQGRTQRPRSSTTAQP. Positions 666–694 are disordered; the sequence is LKQGRTQRPRSSTTAQPTMHTVDTTTPTH. Residues 683–694 show a composition bias toward low complexity; sequence TMHTVDTTTPTH. Asn695 is a glycosylation site (N-linked (GlcNAc...) asparagine). Residues 703–723 form a helical membrane-spanning segment; that stretch reads LLTGTISGGALLILLVISACL. The Cytoplasmic portion of the chain corresponds to 724 to 897; sequence CLCKRRHSRG…SSGSLNSVGV (174 aa). Disordered regions lie at residues 773-793 and 819-849; these read AQQQQQQLQQQHQQDEKDSQD and MSSSSLRRSQRTLERAAAGGGSGGNNNNLNQ. The segment covering 774 to 784 has biased composition (low complexity); sequence QQQQQQLQQQH.

It belongs to the immunoglobulin superfamily. IHOG family. Homodimer. Heterotetramer; 2 iHog chains bind 2 hh chains when facilitated by heparin, heparin is required to promote high-affinity interactions between hh and iHog.

The protein resides in the membrane. Mediates response to the active Hedgehog (Hh) protein signal in embryos, functioning upstream or at the level of patched (ptc). The polypeptide is Interference hedgehog (Drosophila mojavensis (Fruit fly)).